A 521-amino-acid polypeptide reads, in one-letter code: GMP synthase [glutamine-hydrolyzing] (521 aa).

A Glutamine amidotransferase type-1 domain is found at 5–197 (KILILDFGSQ…VLDICGAQPG (193 aa)). Cysteine 81 (nucleophile) is an active-site residue. Active-site residues include histidine 171 and glutamate 173. Residues 198–390 (WTMPNYIEEA…LGLPREMVYR (193 aa)) enclose the GMPS ATP-PPase domain. 225 to 231 (SGGVDSS) serves as a coordination point for ATP.

In terms of assembly, homodimer.

It catalyses the reaction XMP + L-glutamine + ATP + H2O = GMP + L-glutamate + AMP + diphosphate + 2 H(+). The protein operates within purine metabolism; GMP biosynthesis; GMP from XMP (L-Gln route): step 1/1. Its function is as follows. Catalyzes the synthesis of GMP from XMP. In Neisseria gonorrhoeae (strain ATCC 700825 / FA 1090), this protein is GMP synthase [glutamine-hydrolyzing].